The chain runs to 227 residues: Ribose-5-phosphate isomerase A (227 aa).

Substrate is bound by residues 26–29 (TGST), 82–85 (DGAD), and 95–98 (KGGG). Catalysis depends on E104, which acts as the Proton acceptor. K122 serves as a coordination point for substrate.

It belongs to the ribose 5-phosphate isomerase family. As to quaternary structure, homodimer.

The enzyme catalyses aldehydo-D-ribose 5-phosphate = D-ribulose 5-phosphate. Its pathway is carbohydrate degradation; pentose phosphate pathway; D-ribose 5-phosphate from D-ribulose 5-phosphate (non-oxidative stage): step 1/1. Functionally, catalyzes the reversible conversion of ribose-5-phosphate to ribulose 5-phosphate. The protein is Ribose-5-phosphate isomerase A of Streptococcus equi subsp. zooepidemicus (strain MGCS10565).